The primary structure comprises 98 residues: MEIELSNNAVSWFKEELELPEGDKVLQFFVRYGGEFQLKQGFSPAFSVDKKEDVEIGYENHYDGLDVVIAEKDLWYFEDHNLFIDVNDGIDEISYATK.

Belongs to the HesB/IscA family.

This is an uncharacterized protein from Staphylococcus saprophyticus subsp. saprophyticus (strain ATCC 15305 / DSM 20229 / NCIMB 8711 / NCTC 7292 / S-41).